Here is a 576-residue protein sequence, read N- to C-terminus: Boron transporter 1 (576 aa).

The Cytoplasmic segment spans residues 1–84 (MSNESTRVTV…SDWVDAFNYR (84 aa)). The disordered stretch occupies residues 19–48 (ECAQALERTNDELDRESSVSESRSDEESHE). Residues 26–48 (RTNDELDRESSVSESRSDEESHE) are compositionally biased toward basic and acidic residues. The helical transmembrane segment at 85–105 (VIPSIVDTYFNNLLPAIAFAQ) threads the bilayer. Residues 106–116 (DMFDRTDNSYG) lie on the Extracellular side of the membrane. Residues 117–134 (VNEVLLSSAMAGIVFGVL) form a helical membrane-spanning segment. The Cytoplasmic segment spans residues 135–140 (GGQPLC). Residues 141–160 (IVGVTGPISIFNYTVYEIIK) traverse the membrane as a helical segment. At 161–165 (PLNTS) the chain is on the extracellular side. A helical membrane pass occupies residues 166-186 (YFGFMFWICMWSMIFHLVLAF). Residues 187–192 (TNAVCL) lie on the Cytoplasmic side of the membrane. The helical transmembrane segment at 193–213 (LQYVTTFPCDIFGLFINVVYI) threads the bilayer. Over 214–235 (QKGIQILTRQFSAKSGEKSVQD) the chain is Extracellular. A helical membrane pass occupies residues 236-256 (GFASVVVALVMTAFGLFFKLF). At 257–274 (HYYPLFSHRIRTFISDYS) the chain is on the cytoplasmic side. Residues 275 to 295 (TALSVLFWSSFTHFGGYLHDV) form a helical membrane-spanning segment. Over 296 to 329 (KFKKLPITKAFFPTSKVNRPQNTWLAYEPIPVKD) the chain is Extracellular. Residues 330-350 (VFIALPFGIFLTILFYFDHNV) form a helical membrane-spanning segment. The Cytoplasmic segment spans residues 351–373 (SSLMAQRHQYKLKKPSSFHYDFA). The helical transmembrane segment at 374 to 394 (LLGLTTCISGVLGIPAPNGLI) threads the bilayer. At 395–438 (PQAPLHTETLLVRDSNQKVISCVEQRFTNTFQGLMILGTMTRPL) the chain is on the extracellular side. A helical membrane pass occupies residues 439 to 459 (LVCLGEIPQAVLSGLFFIMGI). At 460-495 (NGLMTNSIIQRLVFLFSDPNRRDNTSPLMKVSKKSM) the chain is on the cytoplasmic side. The helical transmembrane segment at 496–516 (LIFLSFSLTGFAGEFAITNTI) threads the bilayer. The Extracellular segment spans residues 517–518 (AA). The chain crosses the membrane as a helical span at residues 519 to 539 (IGFPLVLLLSVLVSFSFAYIF). Over 540–576 (PTEELKILDTNVAQKFTIKNLLLENIRDAKFCDKHED) the chain is Cytoplasmic.

This sequence belongs to the anion exchanger (TC 2.A.31) family.

Its subcellular location is the cell membrane. The protein localises to the vacuole membrane. Functionally, functions in boric acid/borate export across the plasma membrane, and thereby protects yeast cells from boron toxicity. Involved in the trafficking of proteins to the vacuole. The polypeptide is Boron transporter 1 (BOR1) (Saccharomyces cerevisiae (strain ATCC 204508 / S288c) (Baker's yeast)).